The primary structure comprises 419 residues: UDP-N-acetylglucosamine 1-carboxyvinyltransferase (419 aa).

22-23 provides a ligand contact to phosphoenolpyruvate; sequence KN. UDP-N-acetyl-alpha-D-glucosamine is bound at residue arginine 91. The active-site Proton donor is cysteine 115. Residue cysteine 115 is modified to 2-(S-cysteinyl)pyruvic acid O-phosphothioketal. Residues 120 to 124, 160 to 163, aspartate 305, and valine 327 each bind UDP-N-acetyl-alpha-D-glucosamine; these read RPVDL and KVSV.

Belongs to the EPSP synthase family. MurA subfamily.

It is found in the cytoplasm. The catalysed reaction is phosphoenolpyruvate + UDP-N-acetyl-alpha-D-glucosamine = UDP-N-acetyl-3-O-(1-carboxyvinyl)-alpha-D-glucosamine + phosphate. Its pathway is cell wall biogenesis; peptidoglycan biosynthesis. Its function is as follows. Cell wall formation. Adds enolpyruvyl to UDP-N-acetylglucosamine. The sequence is that of UDP-N-acetylglucosamine 1-carboxyvinyltransferase from Escherichia coli (strain K12 / MC4100 / BW2952).